The primary structure comprises 412 residues: uncharacterized protein (412 aa).

A Zn(2+)-binding site is contributed by His-49. The Proton acceptor role is filled by Glu-52. Zn(2+)-binding residues include His-53 and Glu-129.

This sequence belongs to the peptidase M16 family. Zn(2+) is required as a cofactor.

This is an uncharacterized protein from Rickettsia felis (strain ATCC VR-1525 / URRWXCal2) (Rickettsia azadi).